The sequence spans 876 residues: MSDDTVTPMMAQYLEIKAQHPGAILFYRMGDFYEMFFEDAALAAEALDIALTKRGKHKGEDIAMCGVPIHAAEGYLLTLIRKGFRVAIAEQMEDPAEAKKRGSKSVVRREVVRLVTPGTLTEDSLLEARRHNFLCAFAEIRDEAALAWADISTGEFSVTPCPLPRLLPELARLAPRELLVADERPLDWIEEVGCALTPLARASFDSASAEKRLCTLFGVGTLDSFGNFTRPELSAMGALVDYLDLTQRGKLPLLRPPVREVAGGTVQIDAATRRNLEITQALTGGREGSLLSAVDRTVTAPGARLLERRLSSPSRDLGLIHDRLAAVSWLTDEPRLREDLRASLRRVPDMDRALSRLALDRAGPRDMAAIRAGLTQAEAIAGRMPADAPSLLAETLEALRGHENLVDLLDQALVAEPPLLVRDGGFIAPGFDDDLDETRRLRDEGRGVIASMQAGFIETTGIQSLKIKHNNVLGYFIEVTSTHAEKMLSPPLSESFIHRQTTAGQVRFTTVALSELETRILNAGNRALELEKMHFAALRTAILDQAGAIGRAARALAEVDLIAAFADLAVAEDWTEPQVDDSRAFAIEAGRHPVVERALRRTGTPFVANDCDLSKAETPAVWLITGPNMAGKSTFLRQNALIALLAQAGSFVPARRAHIGLVSQIFSRVGASDDLARGRSTFMVEMVETAAILNQADDRALVILDEIGRGTATWDGLSIAWATLEHLHDTNRCRALFATHYHEMTALAGKLTGVENATVSVKEWQGEVIFLHEVRRGAADRSYGVQVARLAGLPASVIERARTVLDALESGERESGPRRQALIDDLPLFRAAPPPPAPAAPPKASQVEERLRAIQPDDLSPREALKLLYDLRALLP.

626–633 (GPNMAGKS) is a binding site for ATP. Residues 829–856 (FRAAPPPPAPAAPPKASQVEERLRAIQP) form a disordered region. Residues 832 to 841 (APPPPAPAAP) are compositionally biased toward pro residues.

The protein belongs to the DNA mismatch repair MutS family.

This protein is involved in the repair of mismatches in DNA. It is possible that it carries out the mismatch recognition step. This protein has a weak ATPase activity. The chain is DNA mismatch repair protein MutS from Cereibacter sphaeroides (strain ATCC 17025 / ATH 2.4.3) (Rhodobacter sphaeroides).